Reading from the N-terminus, the 1419-residue chain is DNA-directed RNA polymerase subunit beta' (1419 aa).

Residues Cys71, Cys73, Cys86, and Cys89 each contribute to the Zn(2+) site. The Mg(2+) site is built by Asp461, Asp463, and Asp465. 4 residues coordinate Zn(2+): Cys815, Cys889, Cys896, and Cys899.

It belongs to the RNA polymerase beta' chain family. In terms of assembly, the RNAP catalytic core consists of 2 alpha, 1 beta, 1 beta' and 1 omega subunit. When a sigma factor is associated with the core the holoenzyme is formed, which can initiate transcription. Requires Mg(2+) as cofactor. Zn(2+) serves as cofactor.

The catalysed reaction is RNA(n) + a ribonucleoside 5'-triphosphate = RNA(n+1) + diphosphate. DNA-dependent RNA polymerase catalyzes the transcription of DNA into RNA using the four ribonucleoside triphosphates as substrates. The protein is DNA-directed RNA polymerase subunit beta' of Actinobacillus succinogenes (strain ATCC 55618 / DSM 22257 / CCUG 43843 / 130Z).